The primary structure comprises 181 residues: MVSSCCGSVSSEQSCGLENCCRPSCCQTTCCRTTCCRPSCCKPQCCQSVCYQPTCCHPSCCISSCCRPYCCESSCCRPCCCQTTCCRTTCCRTTCCCPSCCVSSCCRPQCCQSVCCQPTCCRPSCCISSCCHPSCCESSCCRPCCCVRPVCGRVSCHTTCYRPTCVISTCPRPLCCASSCC.

A run of 26 repeats spans residues 5–9, 20–24, 25–29, 30–34, 35–39, 40–44, 45–49, 55–59, 60–64, 65–69, 70–74, 75–79, 80–84, 85–89, 90–94, 95–99, 100–104, 105–109, 110–114, 115–119, 120–124, 125–129, 130–134, 135–139, 140–144, and 145–149. Residues 5 to 154 are 26 X 5 AA repeats of C-C-[GRQVCHIEK]-[SPTR]-[VSTQYC]; it reads CCGSVSSEQS…CCVRPVCGRV (150 aa).

It belongs to the KRTAP type 4 family. Interacts with hair keratins. Expressed in the hair follicles.

In terms of biological role, in the hair cortex, hair keratin intermediate filaments are embedded in an interfilamentous matrix, consisting of hair keratin-associated proteins (KRTAP), which are essential for the formation of a rigid and resistant hair shaft through their extensive disulfide bond cross-linking with abundant cysteine residues of hair keratins. The matrix proteins include the high-sulfur and high-glycine-tyrosine keratins. In Homo sapiens (Human), this protein is Keratin-associated protein 4-5 (KRTAP4-5).